A 428-amino-acid polypeptide reads, in one-letter code: Probable 4-methylmuconolactone transporter (428 aa).

Residues 1–26 (MFAWYKAGSPQQKKTFWACYSGWALD) lie on the Cytoplasmic side of the membrane. The helical transmembrane segment at 27–47 (SFDMQMFSFLLPALTLTWGLT) threads the bilayer. Topologically, residues 48–50 (KAE) are periplasmic. The chain crosses the membrane as a helical span at residues 51–71 (VGVLGTVALVVTAIGGWGAGI). The Cytoplasmic portion of the chain corresponds to 72 to 80 (LSDRYGRAR). The helical transmembrane segment at 81-101 (ILVLAIIWFTLFGVLAGFAQS) threads the bilayer. Residues 102 to 110 (YQQLLIART) lie on the Periplasmic side of the membrane. Residues 111–131 (LQGLGFGGEWAVGAALMAEVI) traverse the membrane as a helical segment. Topologically, residues 132–145 (DSRHRGKAIGFVQS) are cytoplasmic. The helical transmembrane segment at 146–166 (GFALGWALAVVVATLLLAWLP) threads the bilayer. A topological domain (periplasmic) is located at residue lysine 167. The chain crosses the membrane as a helical span at residues 168–188 (EMAWRVAFWSGIIPALIVLFI). Over 189 to 227 (RRHVKDSSMFERARQSRAPRASLSSVFNRKYARTLALSS) the chain is Cytoplasmic. The helical transmembrane segment at 228-248 (VLVIGLQAGCYAILVWLPSLL) threads the bilayer. The Periplasmic segment spans residues 249-252 (NQRQ). The chain crosses the membrane as a helical span at residues 253–273 (VAAGSMIVTVFIMAFGSFCGF). Topologically, residues 274–287 (AVTADLSDRIGRRP) are cytoplasmic. The helical transmembrane segment at 288-308 (TLILLSVCAWIVTVSYMLLPL) threads the bilayer. Residues 309 to 314 (NTTLTA) lie on the Periplasmic side of the membrane. The chain crosses the membrane as a helical span at residues 315–335 (ILGFLVGFSAIGMFAALGPFL). The Cytoplasmic portion of the chain corresponds to 336-356 (SELFPTNVRTTCMGFAYNVGK). Residues 357-371 (SIGAGSVVGVGVLST) form a helical membrane-spanning segment. Residues 372-377 (HIGLAN) are Periplasmic-facing. Residues 378 to 398 (AMGTFCLVAYAFAVFGIMLLP) form a helical membrane-spanning segment. At 399–428 (ETRGIAIENIGEADAHSPAAPLAQPASARS) the chain is on the cytoplasmic side.

This sequence belongs to the major facilitator superfamily. Sugar transporter (TC 2.A.1.1) family.

Its subcellular location is the cell inner membrane. In terms of biological role, probable uptake of 4-methylmuconolactone. This chain is Probable 4-methylmuconolactone transporter, found in Cupriavidus pinatubonensis (strain JMP 134 / LMG 1197) (Cupriavidus necator (strain JMP 134)).